Consider the following 552-residue polypeptide: CTP synthase (552 aa).

Residues 1–265 (MTKYIFITGG…DEIVVRKLRL (265 aa)) form an amidoligase domain region. Ser-13 serves as a coordination point for CTP. Ser-13 contacts UTP. Residues 14–19 (SLGKGI) and Asp-71 each bind ATP. Residues Asp-71 and Glu-139 each contribute to the Mg(2+) site. CTP contacts are provided by residues 146-148 (DIE), 186-191 (KTKPTQ), and Lys-222. UTP is bound by residues 186 to 191 (KTKPTQ) and Lys-222. A Glutamine amidotransferase type-1 domain is found at 290–541 (TVAMVGKYVN…VRAARARSEG (252 aa)). Gly-351 contacts L-glutamine. Cys-378 serves as the catalytic Nucleophile; for glutamine hydrolysis. L-glutamine contacts are provided by residues 379-382 (LGMQ), Glu-402, and Arg-469. Active-site residues include His-514 and Glu-516.

This sequence belongs to the CTP synthase family. As to quaternary structure, homotetramer.

It carries out the reaction UTP + L-glutamine + ATP + H2O = CTP + L-glutamate + ADP + phosphate + 2 H(+). The catalysed reaction is L-glutamine + H2O = L-glutamate + NH4(+). The enzyme catalyses UTP + NH4(+) + ATP = CTP + ADP + phosphate + 2 H(+). Its pathway is pyrimidine metabolism; CTP biosynthesis via de novo pathway; CTP from UDP: step 2/2. Its activity is regulated as follows. Allosterically activated by GTP, when glutamine is the substrate; GTP has no effect on the reaction when ammonia is the substrate. The allosteric effector GTP functions by stabilizing the protein conformation that binds the tetrahedral intermediate(s) formed during glutamine hydrolysis. Inhibited by the product CTP, via allosteric rather than competitive inhibition. In terms of biological role, catalyzes the ATP-dependent amination of UTP to CTP with either L-glutamine or ammonia as the source of nitrogen. Regulates intracellular CTP levels through interactions with the four ribonucleotide triphosphates. This is CTP synthase from Methylococcus capsulatus (strain ATCC 33009 / NCIMB 11132 / Bath).